A 230-amino-acid polypeptide reads, in one-letter code: N-(5'-phosphoribosyl)anthranilate isomerase (230 aa).

It belongs to the TrpF family.

It carries out the reaction N-(5-phospho-beta-D-ribosyl)anthranilate = 1-(2-carboxyphenylamino)-1-deoxy-D-ribulose 5-phosphate. It participates in amino-acid biosynthesis; L-tryptophan biosynthesis; L-tryptophan from chorismate: step 3/5. This Thermosynechococcus vestitus (strain NIES-2133 / IAM M-273 / BP-1) protein is N-(5'-phosphoribosyl)anthranilate isomerase.